The following is a 419-amino-acid chain: 4-hydroxyphenylpyruvate dioxygenase (419 aa).

2 consecutive VOC domains span residues 37–185 (GYDH…LLSR) and 216–376 (RIDH…LFTR). The Fe cation site is built by H219, H302, and E387.

It belongs to the 4HPPD family. Fe cation serves as cofactor.

The enzyme catalyses 3-(4-hydroxyphenyl)pyruvate + O2 = homogentisate + CO2. Its pathway is amino-acid degradation; L-phenylalanine degradation; acetoacetate and fumarate from L-phenylalanine: step 3/6. In Pyricularia oryzae (strain 70-15 / ATCC MYA-4617 / FGSC 8958) (Rice blast fungus), this protein is 4-hydroxyphenylpyruvate dioxygenase (HPD4).